We begin with the raw amino-acid sequence, 775 residues long: Metal transporter CNNM4 (775 aa).

Residues 1 to 178 are Extracellular-facing; sequence MAPVGGGGRP…LLFMVEEPGR (178 aa). N-linked (GlcNAc...) asparagine glycans are attached at residues Asn85 and Asn122. One can recognise a CNNM transmembrane domain in the interval 178-358; that stretch reads RFLPLWLHIL…EPYNDLVKEE (181 aa). Residues 179–199 form a helical membrane-spanning segment; it reads FLPLWLHILLITVLLVLSGIF. The Cytoplasmic segment spans residues 200–240; that stretch reads SGLNLGLMALDPMELRIVQNCGTEKERRYARKIEPIRRKGN. The segment at residues 241–261 is an intramembrane region (helical); that stretch reads YLLCSLLLGNVLVNTSLTILL. Topologically, residues 262–264 are cytoplasmic; the sequence is DNL. The chain crosses the membrane as a helical span at residues 265–285; that stretch reads IGSGLMAVASSTIGIVIFGEI. Over 286–293 the chain is Extracellular; sequence LPQALCSR. The chain crosses the membrane as a helical span at residues 294–316; it reads HGLAVGANTILLTKFFMLLTFPL. At 317 to 775 the chain is on the cytoplasmic side; it reads SFPISKLLDF…LHKASHENAI (459 aa). 2 CBS domains span residues 377–438 and 445–511; these read MTQL…CTPL and YNHP…ILDE. 3 positions are modified to phosphoserine: Ser660, Ser664, and Ser770.

Belongs to the ACDP family. Interacts with COX11. In terms of tissue distribution, widely expressed. Highly expressed in heart.

It localises to the cell membrane. Probable metal transporter. The interaction with the metal ion chaperone COX11 suggests that it may play a role in sensory neuron functions. May play a role in biomineralization and retinal function. This chain is Metal transporter CNNM4 (CNNM4), found in Homo sapiens (Human).